Reading from the N-terminus, the 397-residue chain is Cathepsin E-B (397 aa).

The N-terminal stretch at 1–16 (MRQILVLLLFVTLVYG) is a signal peptide. A propeptide spans 17–49 (LIRVPLKRQKSIRKTPKEKGKLSHVWTQQGIDM) (activation peptide). One can recognise a Peptidase A1 domain in the interval 74–385 (YFGEISIGTP…DRGNNRVGLA (312 aa)). The N-linked (GlcNAc...) asparagine glycan is linked to Asn86. The active site involves Asp92. Cys105 and Cys110 form a disulfide bridge. Asn130 is a glycosylation site (N-linked (GlcNAc...) asparagine). Cys268 and Cys272 form a disulfide bridge. The active site involves Asp277. Cysteines 310 and 344 form a disulfide.

It belongs to the peptidase A1 family. Homodimer; disulfide-linked. In terms of processing, glycosylated. Contains high mannose-type oligosaccharide. In terms of tissue distribution, expressed predominantly in the anterior and posterior adult stomach and at much lower levels in the larval foregut.

The protein resides in the endosome. It catalyses the reaction Similar to cathepsin D, but slightly broader specificity.. Its function is as follows. May have a role in immune function. Probably involved in the processing of antigenic peptides during MHC class II-mediated antigen presentation. The chain is Cathepsin E-B (ctse-b) from Xenopus laevis (African clawed frog).